The sequence spans 146 residues: Keratin-associated protein 12-2 (146 aa).

A run of 23 repeats spans residues 10–14, 15–19, 20–24, 25–29, 34–38, 40–44, 45–49, 55–59, 60–64, 65–69, 70–74, 75–79, 80–84, 85–89, 90–94, 95–99, 100–104, 105–109, 110–114, 120–124, 125–129, 130–134, and 135–139. Residues 10–139 form a 23 X 5 AA approximate repeats region; it reads CQPACCAPSP…CTSVLCRPIS (130 aa).

This sequence belongs to the KRTAP type 12 family. In terms of assembly, interacts with hair keratins. In terms of tissue distribution, restricted to a narrow region of the hair fiber cuticle, lying approximately 20 cell layers above the apex of the dermal papilla of the hair root; not detected in any other tissues.

Its function is as follows. In the hair cortex, hair keratin intermediate filaments are embedded in an interfilamentous matrix, consisting of hair keratin-associated proteins (KRTAP), which are essential for the formation of a rigid and resistant hair shaft through their extensive disulfide bond cross-linking with abundant cysteine residues of hair keratins. The matrix proteins include the high-sulfur and high-glycine-tyrosine keratins. The chain is Keratin-associated protein 12-2 (KRTAP12-2) from Homo sapiens (Human).